Consider the following 139-residue polypeptide: Large ribosomal subunit protein uL16 (139 aa).

Belongs to the universal ribosomal protein uL16 family. Part of the 50S ribosomal subunit.

In terms of biological role, binds 23S rRNA and is also seen to make contacts with the A and possibly P site tRNAs. This is Large ribosomal subunit protein uL16 from Koribacter versatilis (strain Ellin345).